Consider the following 261-residue polypeptide: Fructoselysine 6-kinase (261 aa).

It belongs to the carbohydrate kinase PfkB family. As to quaternary structure, monomer.

It carries out the reaction N(6)-(D-fructosyl)-L-lysine + ATP = N(6)-(6-phospho-D-fructosyl)-L-lysine + ADP + H(+). Its pathway is carbohydrate metabolism; fructoselysine degradation; D-glucose 6-phosphate and lysine from fructoselysine: step 1/2. In terms of biological role, catalyzes the ATP-dependent phosphorylation of fructoselysine to fructoselysine 6-phosphate. Functions in a fructoselysine degradation pathway that allows E.coli to grow on fructoselysine or psicoselysine. To a much lesser extenst, is also able to phosphorylate psicoselysine. This Escherichia coli (strain K12) protein is Fructoselysine 6-kinase.